Reading from the N-terminus, the 457-residue chain is tRNA modification GTPase MnmE (457 aa).

Positions 25, 87, and 126 each coordinate (6S)-5-formyl-5,6,7,8-tetrahydrofolate. One can recognise a TrmE-type G domain in the interval Gly-223–Phe-377. Asn-233 contacts K(+). GTP is bound by residues Asn-233–Ser-238, Thr-252–Thr-258, and Asp-277–Gly-280. Position 237 (Ser-237) interacts with Mg(2+). K(+)-binding residues include Thr-252, Ile-254, and Thr-257. Thr-258 is a binding site for Mg(2+). Residue Lys-457 participates in (6S)-5-formyl-5,6,7,8-tetrahydrofolate binding.

The protein belongs to the TRAFAC class TrmE-Era-EngA-EngB-Septin-like GTPase superfamily. TrmE GTPase family. Homodimer. Heterotetramer of two MnmE and two MnmG subunits. The cofactor is K(+).

It localises to the cytoplasm. Exhibits a very high intrinsic GTPase hydrolysis rate. Involved in the addition of a carboxymethylaminomethyl (cmnm) group at the wobble position (U34) of certain tRNAs, forming tRNA-cmnm(5)s(2)U34. This chain is tRNA modification GTPase MnmE, found in Streptococcus pneumoniae serotype 2 (strain D39 / NCTC 7466).